Reading from the N-terminus, the 448-residue chain is Phosphoglucosamine mutase (448 aa).

Serine 104 functions as the Phosphoserine intermediate in the catalytic mechanism. Positions 104, 243, 245, and 247 each coordinate Mg(2+). Serine 104 carries the phosphoserine modification.

The protein belongs to the phosphohexose mutase family. Requires Mg(2+) as cofactor. Activated by phosphorylation.

It carries out the reaction alpha-D-glucosamine 1-phosphate = D-glucosamine 6-phosphate. Catalyzes the conversion of glucosamine-6-phosphate to glucosamine-1-phosphate. This Xylella fastidiosa (strain Temecula1 / ATCC 700964) protein is Phosphoglucosamine mutase.